The following is a 313-amino-acid chain: Dihydroorotate dehydrogenase (fumarate) (313 aa).

FMN contacts are provided by residues Ala20 and Lys44–Ser45. Substrate is bound by residues Lys44, Asn68–Leu72, and Asn128. Asn128 contributes to the FMN binding site. Cys131 acts as the Nucleophile in catalysis. Asn133 is a binding site for substrate. FMN-binding residues include Lys165 and Val194. Position 195–196 (Asn195–Ser196) interacts with substrate. Residues Gly223, Cys249, Cys249–Gly251, and Gly272–Thr273 each bind FMN.

This sequence belongs to the dihydroorotate dehydrogenase family. Type 1 subfamily. In terms of assembly, homodimer. Requires FMN as cofactor.

The protein resides in the cytoplasm. The catalysed reaction is (S)-dihydroorotate + fumarate = orotate + succinate. It functions in the pathway pyrimidine metabolism; UMP biosynthesis via de novo pathway. Its function is as follows. Catalyzes the conversion of dihydroorotate to orotate with fumarate as the electron acceptor. Molecular oxygen can replace fumarate in vitro. This Trypanosoma brucei brucei (strain 927/4 GUTat10.1) protein is Dihydroorotate dehydrogenase (fumarate).